We begin with the raw amino-acid sequence, 299 residues long: Putative KilA-N domain-containing protein R879 (299 aa).

The KilA-N domain maps to 1 to 75 (MKSDNGILMS…IKVSEIVLSY (75 aa)). Residues 76–150 (HAKEAIKEKE…DKKINELLSK (75 aa)) are a coiled coil.

This Acanthamoeba polyphaga mimivirus (APMV) protein is Putative KilA-N domain-containing protein R879.